The following is a 232-amino-acid chain: tRNA1(Val) (adenine(37)-N6)-methyltransferase (232 aa).

Belongs to the methyltransferase superfamily. tRNA (adenine-N(6)-)-methyltransferase family.

Its subcellular location is the cytoplasm. The catalysed reaction is adenosine(37) in tRNA1(Val) + S-adenosyl-L-methionine = N(6)-methyladenosine(37) in tRNA1(Val) + S-adenosyl-L-homocysteine + H(+). Specifically methylates the adenine in position 37 of tRNA(1)(Val) (anticodon cmo5UAC). The polypeptide is tRNA1(Val) (adenine(37)-N6)-methyltransferase (Haemophilus influenzae (strain 86-028NP)).